The primary structure comprises 43 residues: uncharacterized protein (43 aa).

The signal sequence occupies residues 1–16 (MKLLNFILIIFNALKS). Residue Asn37 is glycosylated (N-linked (GlcNAc...) asparagine; by host).

This is an uncharacterized protein from Acheta domesticus (House cricket).